The chain runs to 193 residues: Pyridoxal 5'-phosphate synthase subunit PdxT (193 aa).

50 to 52 contributes to the L-glutamine binding site; it reads GES. C82 serves as the catalytic Nucleophile. L-glutamine-binding positions include R109 and 136-137; that span reads IR. Active-site charge relay system residues include H172 and E174.

The protein belongs to the glutaminase PdxT/SNO family. As to quaternary structure, in the presence of PdxS, forms a dodecamer of heterodimers. Only shows activity in the heterodimer.

The enzyme catalyses aldehydo-D-ribose 5-phosphate + D-glyceraldehyde 3-phosphate + L-glutamine = pyridoxal 5'-phosphate + L-glutamate + phosphate + 3 H2O + H(+). The catalysed reaction is L-glutamine + H2O = L-glutamate + NH4(+). The protein operates within cofactor biosynthesis; pyridoxal 5'-phosphate biosynthesis. Functionally, catalyzes the hydrolysis of glutamine to glutamate and ammonia as part of the biosynthesis of pyridoxal 5'-phosphate. The resulting ammonia molecule is channeled to the active site of PdxS. The chain is Pyridoxal 5'-phosphate synthase subunit PdxT from Streptococcus pneumoniae serotype 2 (strain D39 / NCTC 7466).